Here is a 240-residue protein sequence, read N- to C-terminus: Uridylate kinase (240 aa).

13–16 (KASG) lines the ATP pocket. Residue glycine 55 coordinates UMP. 2 residues coordinate ATP: glycine 56 and arginine 60. Residues aspartate 75 and 136-143 (TGNPFFTT) contribute to the UMP site. ATP is bound by residues threonine 163, glutamine 164, tyrosine 169, and aspartate 172.

This sequence belongs to the UMP kinase family. Homohexamer.

The protein resides in the cytoplasm. It catalyses the reaction UMP + ATP = UDP + ADP. It participates in pyrimidine metabolism; CTP biosynthesis via de novo pathway; UDP from UMP (UMPK route): step 1/1. Its activity is regulated as follows. Inhibited by UTP. Its function is as follows. Catalyzes the reversible phosphorylation of UMP to UDP. In Mesorhizobium japonicum (strain LMG 29417 / CECT 9101 / MAFF 303099) (Mesorhizobium loti (strain MAFF 303099)), this protein is Uridylate kinase.